The following is a 2641-amino-acid chain: Inverse autotransporter adhesin YeeJ (2641 aa).

Positions 1 to 25 (MGIKLRRLTAGICLITQLVFPMAAA) are cleaved as a signal peptide. One can recognise a LysM domain in the interval 50–98 (VPYTLGALESAQSVAERFGISVAELRKLNQFRTFARGFDNVRQGDELDV). An inverse autotransporter region spans residues 125–400 (TSQQIGSLLA…SRFDLVDRNN (276 aa)). An invasin 3 domain region spans residues 513-605 (QKDSSVSLSS…GVDAAKAPAV (93 aa)). Big-1 domains are found at residues 617–711 (HSSI…AGFI), 721–815 (IATL…VSFV), 822–913 (QVDL…VIFI), 920–1017 (ALTL…MTFV), 1024–1116 (VVVL…VNIA), 1123–1220 (QVTL…VTFV), 1227–1319 (VVVL…VNIA), 1326–1423 (QVTL…VTFV), 1430–1523 (LVVL…VHFI), 1531–1633 (IIEL…SINV), 1641–1734 (HLTL…VTYV), 1741–1837 (EISL…VNFI), 1844–1941 (QVNL…VTLI), 1948–2032 (KLAS…PTEV), 2048–2141 (ITSL…VIDQ), 2142–2235 (KLTL…IVKV), and 2244–2336 (VASF…ITLV). Positions 2538–2641 (KSWWVNAGDA…FAYATCYKNL (104 aa)) are C-type lectin domain.

This sequence belongs to the intimin/invasin family.

The protein resides in the cell outer membrane. In terms of biological role, a probable inverse autotransporter, it may be involved in biofilm formation and cell adhesion. May bind peptidoglycan via its LysM domain. This Escherichia coli O157:H7 protein is Inverse autotransporter adhesin YeeJ (yeeJ).